We begin with the raw amino-acid sequence, 264 residues long: Ribosomal RNA small subunit methyltransferase A (264 aa).

S-adenosyl-L-methionine-binding residues include His-15, Leu-17, Gly-42, Glu-63, Asp-88, and Asn-109.

The protein belongs to the class I-like SAM-binding methyltransferase superfamily. rRNA adenine N(6)-methyltransferase family. RsmA subfamily.

Its subcellular location is the cytoplasm. The catalysed reaction is adenosine(1518)/adenosine(1519) in 16S rRNA + 4 S-adenosyl-L-methionine = N(6)-dimethyladenosine(1518)/N(6)-dimethyladenosine(1519) in 16S rRNA + 4 S-adenosyl-L-homocysteine + 4 H(+). In terms of biological role, specifically dimethylates two adjacent adenosines (A1518 and A1519) in the loop of a conserved hairpin near the 3'-end of 16S rRNA in the 30S particle. May play a critical role in biogenesis of 30S subunits. The chain is Ribosomal RNA small subunit methyltransferase A from Nitrosococcus oceani (strain ATCC 19707 / BCRC 17464 / JCM 30415 / NCIMB 11848 / C-107).